The chain runs to 491 residues: MALQFQLNQTTPQTVTTDCVIVGIYADKTLSPTAKTLDAASGGRITALTARGDLTGKSGTSALLHDLNGVTAPRVLVVGLGEADKFGPGQYIKAVGDAVRALKDAPVTHALLTLSELPVKDRNAAWNIHQAVIAADHAAYRYTATLGTSRKKAAESGLITLAIHGQESSGLTLGQAIAEGVEYARALGNLPPNICTPVYLAETTAHFAATHPGATCEILDESKMEALGMGALLAVARGSANRPRLIVLKWNGGGDARPYVLVGKGITFDTGGVNLKTQGGIEEMKYDMCGGAAVIGTFVAAVKVRLPLNLIVIVPAVENAIDGNAYRPSDVITSMSGKTIEVGNTDAEGRLILCDALTYAERFKPEALIDVATLTGACMIALGRAATGLMTHHDDLANELLTAGEHVHDRAWRLPLWDEYQNLLDSTFADVYNIGGRWGGAITAGCFLSRFTEGQRWAHLDIAGSASNEGKRGMATGRPVGLLTQWLVDRC.

Mn(2+) is bound by residues Lys-264 and Asp-269. Lys-276 is a catalytic residue. Mn(2+)-binding residues include Asp-287, Asp-346, and Glu-348. The active site involves Arg-350.

This sequence belongs to the peptidase M17 family. It depends on Mn(2+) as a cofactor.

It localises to the cytoplasm. The enzyme catalyses Release of an N-terminal amino acid, Xaa-|-Yaa-, in which Xaa is preferably Leu, but may be other amino acids including Pro although not Arg or Lys, and Yaa may be Pro. Amino acid amides and methyl esters are also readily hydrolyzed, but rates on arylamides are exceedingly low.. The catalysed reaction is Release of an N-terminal amino acid, preferentially leucine, but not glutamic or aspartic acids.. Its function is as follows. Presumably involved in the processing and regular turnover of intracellular proteins. Catalyzes the removal of unsubstituted N-terminal amino acids from various peptides. The chain is Probable cytosol aminopeptidase from Xylella fastidiosa (strain 9a5c).